We begin with the raw amino-acid sequence, 326 residues long: Phospho-N-acetylmuramoyl-pentapeptide-transferase (326 aa).

The next 10 membrane-spanning stretches (helical) occupy residues 2–22, 51–71, 73–93, 113–133, 143–163, 175–195, 199–219, 225–245, 250–270, and 305–325; these read ILAT…FPYF, VPPM…LLWA, LTPE…LGFI, ILIQ…YSAE, GVII…IVGS, GLAA…AYIT, MNIT…LWFN, IFMG…TSVL, MLFA…IIQI, and VIVM…ITFL.

It belongs to the glycosyltransferase 4 family. MraY subfamily. Mg(2+) serves as cofactor.

Its subcellular location is the cell membrane. It carries out the reaction UDP-N-acetyl-alpha-D-muramoyl-L-alanyl-gamma-D-glutamyl-meso-2,6-diaminopimeloyl-D-alanyl-D-alanine + di-trans,octa-cis-undecaprenyl phosphate = di-trans,octa-cis-undecaprenyl diphospho-N-acetyl-alpha-D-muramoyl-L-alanyl-D-glutamyl-meso-2,6-diaminopimeloyl-D-alanyl-D-alanine + UMP. It participates in cell wall biogenesis; peptidoglycan biosynthesis. In terms of biological role, catalyzes the initial step of the lipid cycle reactions in the biosynthesis of the cell wall peptidoglycan: transfers peptidoglycan precursor phospho-MurNAc-pentapeptide from UDP-MurNAc-pentapeptide onto the lipid carrier undecaprenyl phosphate, yielding undecaprenyl-pyrophosphoryl-MurNAc-pentapeptide, known as lipid I. The chain is Phospho-N-acetylmuramoyl-pentapeptide-transferase from Wolbachia pipientis wMel.